Reading from the N-terminus, the 134-residue chain is Small ribosomal subunit protein uS8c (134 aa).

Belongs to the universal ribosomal protein uS8 family. Part of the 30S ribosomal subunit.

The protein resides in the plastid. Its subcellular location is the chloroplast. One of the primary rRNA binding proteins, it binds directly to 16S rRNA central domain where it helps coordinate assembly of the platform of the 30S subunit. This is Small ribosomal subunit protein uS8c (rps8) from Nicotiana tomentosiformis (Tobacco).